The primary structure comprises 287 residues: Bifunctional protein FolD (287 aa).

Residues 166-168, Ser191, and Ile232 each bind NADP(+); that span reads GAS.

It belongs to the tetrahydrofolate dehydrogenase/cyclohydrolase family. As to quaternary structure, homodimer.

The enzyme catalyses (6R)-5,10-methylene-5,6,7,8-tetrahydrofolate + NADP(+) = (6R)-5,10-methenyltetrahydrofolate + NADPH. The catalysed reaction is (6R)-5,10-methenyltetrahydrofolate + H2O = (6R)-10-formyltetrahydrofolate + H(+). It functions in the pathway one-carbon metabolism; tetrahydrofolate interconversion. In terms of biological role, catalyzes the oxidation of 5,10-methylenetetrahydrofolate to 5,10-methenyltetrahydrofolate and then the hydrolysis of 5,10-methenyltetrahydrofolate to 10-formyltetrahydrofolate. This chain is Bifunctional protein FolD, found in Haemophilus ducreyi (strain 35000HP / ATCC 700724).